The following is a 272-amino-acid chain: Shikimate dehydrogenase (NADP(+)) (272 aa).

Shikimate-binding positions include 20–22 (TMS) and T67. The active-site Proton acceptor is K71. An NADP(+)-binding site is contributed by E83. Residues N92 and D107 each contribute to the shikimate site. Residues 129 to 133 (GAGGA), 153 to 158 (NRTKSK), and L216 each bind NADP(+). Y218 lines the shikimate pocket. G239 serves as a coordination point for NADP(+).

The protein belongs to the shikimate dehydrogenase family. In terms of assembly, homodimer.

It catalyses the reaction shikimate + NADP(+) = 3-dehydroshikimate + NADPH + H(+). Its pathway is metabolic intermediate biosynthesis; chorismate biosynthesis; chorismate from D-erythrose 4-phosphate and phosphoenolpyruvate: step 4/7. In terms of biological role, involved in the biosynthesis of the chorismate, which leads to the biosynthesis of aromatic amino acids. Catalyzes the reversible NADPH linked reduction of 3-dehydroshikimate (DHSA) to yield shikimate (SA). This chain is Shikimate dehydrogenase (NADP(+)), found in Maridesulfovibrio salexigens (strain ATCC 14822 / DSM 2638 / NCIMB 8403 / VKM B-1763) (Desulfovibrio salexigens).